A 266-amino-acid polypeptide reads, in one-letter code: uncharacterized protein (266 aa).

At serine 176 the chain carries Phosphoserine. The residue at position 178 (threonine 178) is a Phosphothreonine.

This is an uncharacterized protein from Schizosaccharomyces pombe (strain 972 / ATCC 24843) (Fission yeast).